The primary structure comprises 416 residues: D-amino acid dehydrogenase 2 (416 aa).

FAD is bound at residue 5-19; that stretch reads VCIIGAGVVGLATAY.

The protein belongs to the DadA oxidoreductase family. FAD serves as cofactor.

It carries out the reaction a D-alpha-amino acid + A + H2O = a 2-oxocarboxylate + AH2 + NH4(+). Functionally, oxidative deamination of D-amino acids. The protein is D-amino acid dehydrogenase 2 (dadA2) of Pseudomonas aeruginosa (strain ATCC 15692 / DSM 22644 / CIP 104116 / JCM 14847 / LMG 12228 / 1C / PRS 101 / PAO1).